A 502-amino-acid polypeptide reads, in one-letter code: D-erythritol 1-phosphate dehydrogenase (502 aa).

FAD is bound at residue 8-36; sequence DLFVIGGGINGAGVARDAAGRGLKVVLAE.

The protein belongs to the FAD-dependent glycerol-3-phosphate dehydrogenase family. The cofactor is FAD.

It carries out the reaction D-erythritol 1-phosphate + NADP(+) = D-erythrulose 1-phosphate + NADPH + H(+). It participates in carbohydrate metabolism; erythritol degradation. Catalyzes the oxydation of D-erythritol 1-phosphate to D-erythrulose 1-phosphate. This is D-erythritol 1-phosphate dehydrogenase from Brucella abortus (strain 2308).